A 363-amino-acid polypeptide reads, in one-letter code: Adenosine 3'-phospho 5'-phosphosulfate transporter 2 (363 aa).

A run of 10 helical transmembrane segments spans residues 39-59 (WLQF…YGYM), 63-83 (IFKL…QFVI), 106-126 (IYGV…ASVG), 131-151 (PTQV…GILI), 157-177 (GWID…FTLA), 187-206 (SRGY…IGNI), 231-251 (VFIF…PFFL), 257-277 (TFGY…VVLT), 281-301 (VFGA…TIIL), and 310-330 (FTIE…LNLY).

The protein belongs to the nucleotide-sugar transporter family. SLC35B subfamily.

It localises to the golgi apparatus membrane. In terms of biological role, mediates the transport of adenosine 3'-phospho 5'-phosphosulfate (PAPS), from cytosol into Golgi. PAPS is a universal sulfuryl donor for sulfation events that take place in the Golgi. This is Adenosine 3'-phospho 5'-phosphosulfate transporter 2 (pst-2) from Caenorhabditis briggsae.